Consider the following 318-residue polypeptide: Myoblast determination protein 1 (318 aa).

Residue M1 forms a Peptide (Met-Gly) (interchain with G-Cter in ubiquitin) linkage. Position 104 is an N6-methyllysine; by EHMT2 (K104). In terms of domain architecture, bHLH spans 109–160 (DRRKAATMRERRRLSKVNEAFETLKRCTSSNPNQRLPKVEILRNAIRYIEGL). 2 disordered regions span residues 174-224 (AAAA…RRRN) and 266-318 (APAL…YQVL). Over residues 197-207 (SDASSPRSNCS) the composition is skewed to polar residues. Low complexity predominate over residues 266-276 (APALLLADAPP).

As to quaternary structure, efficient DNA binding requires dimerization with another bHLH protein. Seems to form active heterodimers with ITF-2. Interacts with SUV39H1. Interacts with DDX5. Interacts with CHD2. Interacts with TSC22D3. Interacts with SETD3. Interacts with P-TEFB complex; promotes the transcriptional activity of MYOD1 through its CDK9-mediated phosphorylation. Interacts with CSRP3. Interacts with NUPR1. Phosphorylated by CDK9. This phosphorylation promotes its function in muscle differentiation. In terms of processing, acetylated by a complex containing EP300 and PCAF. The acetylation is essential to activate target genes. Conversely, its deacetylation by SIRT1 inhibits its function. Post-translationally, ubiquitinated on the N-terminus; which is required for proteasomal degradation. Methylation at Lys-104 by EHMT2/G9a inhibits myogenic activity.

The protein localises to the nucleus. Its function is as follows. Acts as a transcriptional activator that promotes transcription of muscle-specific target genes and plays a role in muscle differentiation. Together with MYF5 and MYOG, co-occupies muscle-specific gene promoter core region during myogenesis. Induces fibroblasts to differentiate into myoblasts. Interacts with and is inhibited by the twist protein. This interaction probably involves the basic domains of both proteins. The chain is Myoblast determination protein 1 (MYOD1) from Bos taurus (Bovine).